Here is a 34-residue protein sequence, read N- to C-terminus: MSDIN-like toxin proprotein 3 (34 aa).

Positions 1 to 10 (MSDINTARLP) are excised as a propeptide. Residues 11 to 20 (FFQPPEFRPP) constitute a cross-link (cyclopeptide (Phe-Pro)). Positions 21-34 (CVGDDIEMVLTRGE) are excised as a propeptide.

Belongs to the MSDIN fungal toxin family. Processed by the macrocyclase-peptidase enzyme POPB to yield a toxic cyclic decapeptide. POPB first removes 10 residues from the N-terminus. Conformational trapping of the remaining peptide forces the enzyme to release this intermediate rather than proceed to macrocyclization. The enzyme rebinds the remaining peptide in a different conformation and catalyzes macrocyclization of the N-terminal 10 residues.

Its function is as follows. Probable toxin that belongs to the MSDIN-like toxin family responsible for a large number of food poisoning cases and deaths. This Amanita bisporigera (Destroying angel) protein is MSDIN-like toxin proprotein 3.